The sequence spans 420 residues: F-box/LRR-repeat protein At2g43260 (420 aa).

One can recognise an F-box domain in the interval 7 to 53; sequence NPNSIDILPELLEEVLLRLPTKSILKCRIVSKQWRSLLESSRFAERH. LRR repeat units follow at residues 112 to 135 and 226 to 251; these read QDWI…LNHN and VYRI…QITV.

This Arabidopsis thaliana (Mouse-ear cress) protein is F-box/LRR-repeat protein At2g43260.